The primary structure comprises 629 residues: tRNA uridine 5-carboxymethylaminomethyl modification enzyme MnmG (629 aa).

FAD is bound by residues 13–18, Val-125, and Ser-180; that span reads GGGHAG. 273-287 is a binding site for NAD(+); sequence GPRYCPSIEDKVMRF. Gln-370 provides a ligand contact to FAD.

The protein belongs to the MnmG family. In terms of assembly, homodimer. Heterotetramer of two MnmE and two MnmG subunits. The cofactor is FAD.

Its subcellular location is the cytoplasm. NAD-binding protein involved in the addition of a carboxymethylaminomethyl (cmnm) group at the wobble position (U34) of certain tRNAs, forming tRNA-cmnm(5)s(2)U34. In Psychromonas ingrahamii (strain DSM 17664 / CCUG 51855 / 37), this protein is tRNA uridine 5-carboxymethylaminomethyl modification enzyme MnmG.